The chain runs to 335 residues: MQKKVIAAIIGTSAISAVAATQANAATTHTVKPGESVWAISNKYGISIAKLKSLNNLTSNLIFPNQVLKVSGSSNSTSNSSRPSTNSGGGSYYTVQAGDSLSLIASKYGTTYQNIMRLNGLNNFFIYPGQKLKVSGTASSSNAASNSSRPSTNSGGGSYYTVQAGDSLSLIASKYGTTYQKIMSLNGLNNFFIYPGQKLKVTGNATSSNSASATTTNRGYNTPVFSHQNLYTWGQCTYHVFNRRAEIGKGISTYWWNANNWDNAAAADGYTIDNRPTVGSIAQTDVGYYGHVMFVERVNNDGSILVSEMNYSAAPGILTYRTVPAYQVNNYRYIH.

Positions 1-25 (MQKKVIAAIIGTSAISAVAATQANA) are cleaved as a signal peptide. The 44-residue stretch at 27 to 70 (TTHTVKPGESVWAISNKYGISIAKLKSLNNLTSNLIFPNQVLKV) folds into the LysM 1 domain. Over residues 71-86 (SGSSNSTSNSSRPSTN) the composition is skewed to low complexity. Residues 71 to 90 (SGSSNSTSNSSRPSTNSGGG) are disordered. LysM domains are found at residues 91–134 (SYYT…KLKV) and 158–201 (SYYT…KLKV). In terms of domain architecture, Peptidase C51 spans 211–335 (ASATTTNRGY…YQVNNYRYIH (125 aa)).

It localises to the secreted. The protein resides in the cell surface. It carries out the reaction Hydrolyzes the link between N-acetylmuramoyl residues and L-amino acid residues in certain cell-wall glycopeptides.. Peptidoglycan hydrolase involved in the splitting of the septum during cell division. In Staphylococcus aureus (strain bovine RF122 / ET3-1), this protein is N-acetylmuramoyl-L-alanine amidase sle1 (sle1).